The primary structure comprises 141 residues: Vasotocin-neurophysin VT (141 aa).

The cysteines at positions 1 and 6 are disulfide-linked. Gly-9 carries the post-translational modification Glycine amide. 7 disulfides stabilise this stretch: Cys-22/Cys-66, Cys-25/Cys-39, Cys-33/Cys-56, Cys-40/Cys-46, Cys-73/Cys-85, Cys-79/Cys-97, and Cys-86/Cys-91. A glycan (N-linked (GlcNAc...) asparagine) is linked at Asn-117.

The protein belongs to the vasopressin/oxytocin family. In terms of processing, seven disulfide bonds are present in neurophysin.

It is found in the secreted. In terms of biological role, vasotocin is an antidiuretic hormone. The polypeptide is Vasotocin-neurophysin VT (Pelophylax lessonae (Pool frog)).